Reading from the N-terminus, the 196-residue chain is UPF0340 protein TT_C0214 (196 aa).

This sequence belongs to the UPF0340 family.

In Thermus thermophilus (strain ATCC BAA-163 / DSM 7039 / HB27), this protein is UPF0340 protein TT_C0214.